The chain runs to 232 residues: Large ribosomal subunit protein uL1 (232 aa).

This sequence belongs to the universal ribosomal protein uL1 family. As to quaternary structure, part of the 50S ribosomal subunit.

Its function is as follows. Binds directly to 23S rRNA. The L1 stalk is quite mobile in the ribosome, and is involved in E site tRNA release. In terms of biological role, protein L1 is also a translational repressor protein, it controls the translation of the L11 operon by binding to its mRNA. The sequence is that of Large ribosomal subunit protein uL1 from Xanthomonas axonopodis pv. citri (strain 306).